A 309-amino-acid polypeptide reads, in one-letter code: Probable sugar phosphate/phosphate translocator At5g05820 (309 aa).

10 helical membrane passes run 9–29 (FFTI…LLLN), 42–62 (IFLT…AIAW), 77–97 (FFKI…GNIS), 100–120 (FLPV…TAVF), 130–150 (AWLT…ASGG), 154–174 (FHLF…LKSV), 192–212 (LLLY…LIME), 229–249 (IVWY…TNFL), 256–278 (ALTL…ILIF), and 282–301 (VSVT…ILYS). The EamA domain maps to 30–147 (KYLLSNYGFK…VPVVTGVVIA (118 aa)).

It belongs to the TPT transporter family. TPT (TC 2.A.7.9) subfamily.

The protein resides in the membrane. The sequence is that of Probable sugar phosphate/phosphate translocator At5g05820 from Arabidopsis thaliana (Mouse-ear cress).